The sequence spans 212 residues: Redox-sensing transcriptional repressor Rex (212 aa).

Positions 17-56 (LYYRIFKRFNTDGIEKASSKQIADALGIDSATVRRDFSYF) form a DNA-binding region, H-T-H motif. 91 to 96 (GCGNIG) contributes to the NAD(+) binding site.

The protein belongs to the transcriptional regulatory Rex family. In terms of assembly, homodimer.

Its subcellular location is the cytoplasm. In terms of biological role, modulates transcription in response to changes in cellular NADH/NAD(+) redox state. The sequence is that of Redox-sensing transcriptional repressor Rex from Streptococcus agalactiae serotype III (strain NEM316).